Reading from the N-terminus, the 263-residue chain is 4-hydroxy-tetrahydrodipicolinate reductase (263 aa).

NAD(+)-binding positions include 8–13 (GACGRM), D34, 99–101 (GTT), and 125–128 (SPNY). Catalysis depends on H157, which acts as the Proton donor/acceptor. A (S)-2,3,4,5-tetrahydrodipicolinate-binding site is contributed by H158. K161 (proton donor) is an active-site residue. 167 to 168 (GT) serves as a coordination point for (S)-2,3,4,5-tetrahydrodipicolinate.

This sequence belongs to the DapB family.

It is found in the cytoplasm. The enzyme catalyses (S)-2,3,4,5-tetrahydrodipicolinate + NAD(+) + H2O = (2S,4S)-4-hydroxy-2,3,4,5-tetrahydrodipicolinate + NADH + H(+). The catalysed reaction is (S)-2,3,4,5-tetrahydrodipicolinate + NADP(+) + H2O = (2S,4S)-4-hydroxy-2,3,4,5-tetrahydrodipicolinate + NADPH + H(+). It functions in the pathway amino-acid biosynthesis; L-lysine biosynthesis via DAP pathway; (S)-tetrahydrodipicolinate from L-aspartate: step 4/4. Catalyzes the conversion of 4-hydroxy-tetrahydrodipicolinate (HTPA) to tetrahydrodipicolinate. The protein is 4-hydroxy-tetrahydrodipicolinate reductase of Methanosarcina barkeri (strain Fusaro / DSM 804).